The following is a 114-amino-acid chain: uncharacterized protein (114 aa).

Its function is as follows. May be associated with transposition functions of transposon Tn903. This is an uncharacterized protein from Escherichia coli.